Reading from the N-terminus, the 420-residue chain is MNLASQISQAKTGNATMEWAKNYVSKLNDGQLALLQKMYADHQAKLKASEDEKKKKEMEELKMKAQQQAILDSLTQQIPIMVDVLRSSTSPDSQPSSSSSVMSSTDEDQITVKDVLIGKINKAQRQSSPNSSKPYTPRGIRERVLFDEHLYVFDKCSYDSKKRFFRCERKNTCPARIHTPFDAERVIHKVQVHNHPPPTTFDLAHYNIDYGKVKSGHILSLNGPQQTKNLLPPSLLTPKSDLEDETLSTKTEQKNASTMNILLSMTNNCDGRKPITLRLPDLFNKISEMEIHDMEMTLTKFLLENRELRTDLISRNGDLPVFFPNAHNDELVLFVADQHENDSVFQMIRVSERNEKSIRQAIQEHLQKVSNRSLMMNISSKINVPLSQQMIDQWRTEEFIRLDSSKPNFWKIHHVSKLQD.

Positions 87 to 104 are enriched in low complexity; it reads SSTSPDSQPSSSSSVMSS. Disordered regions lie at residues 87-107 and 119-138; these read SSTSPDSQPSSSSSVMSSTDE and KINKAQRQSSPNSSKPYTPR. Positions 123–134 are enriched in polar residues; the sequence is AQRQSSPNSSKP. An FLYWCH-type zinc finger spans residues 140–195; that stretch reads IRERVLFDEHLYVFDKCSYDSKKRFFRCERKNTCPARIHTPFDAERVIHKVQVHNH.

Functionally, probable transcription factor. May bind to the promoters of target genes, including micro-RNA genes, in order to repress expression, and acting redundantly with flh-2. The protein is FLYWCH transcription factor 3 of Caenorhabditis elegans.